A 364-amino-acid chain; its full sequence is Fructose-bisphosphate aldolase B (364 aa).

Residues R56 and K147 each coordinate substrate. E188 acts as the Proton acceptor in catalysis. The Schiff-base intermediate with dihydroxyacetone-P role is filled by K230.

The protein belongs to the class I fructose-bisphosphate aldolase family. Homotetramer.

The protein resides in the cytoplasm. Its subcellular location is the cytoskeleton. The protein localises to the microtubule organizing center. It is found in the centrosome. It localises to the centriolar satellite. The enzyme catalyses beta-D-fructose 1,6-bisphosphate = D-glyceraldehyde 3-phosphate + dihydroxyacetone phosphate. Its pathway is carbohydrate degradation; glycolysis; D-glyceraldehyde 3-phosphate and glycerone phosphate from D-glucose: step 4/4. This is Fructose-bisphosphate aldolase B (ALDOB) from Gallus gallus (Chicken).